The primary structure comprises 146 residues: Putative pre-16S rRNA nuclease (146 aa).

It belongs to the YqgF nuclease family.

It is found in the cytoplasm. Functionally, could be a nuclease involved in processing of the 5'-end of pre-16S rRNA. In Paraburkholderia phytofirmans (strain DSM 17436 / LMG 22146 / PsJN) (Burkholderia phytofirmans), this protein is Putative pre-16S rRNA nuclease.